We begin with the raw amino-acid sequence, 528 residues long: Capsule biosynthesis protein CapD proenzyme (528 aa).

A signal peptide spans 1–26 (MNSFKWGKKIILFCLIVSLMGGIGVS). The Nucleophile role is filled by threonine 352. Poly-gamma-D-glutamate-binding positions include threonine 352, 429 to 432 (GGNR), and arginine 520.

The protein belongs to the gamma-glutamyltransferase family. As to quaternary structure, this enzyme consists of two polypeptide chains, which are synthesized in precursor form from a single polypeptide. Post-translationally, cleaved by autocatalysis into a large and a small subunit.

Its pathway is capsule biogenesis; capsule polysaccharide biosynthesis. In terms of biological role, transpeptidase that cleaves the poly-gamma-D-glutamate capsule and catalyzes the formation of an amide bond with the side-chain amino group of meso-diaminopimelic acid (m-DAP) in the peptidoglycan scaffold. Degradation of the high-molecular weight capsule (H-capsule) to the lower-molecular weight capsule (L-capsule), which is released from the bacterial cell surface. The production of L-capsule is essential to mediate escape from host defenses. The polypeptide is Capsule biosynthesis protein CapD proenzyme (capD) (Bacillus anthracis).